The primary structure comprises 685 residues: Transforming growth factor beta activator LRRC33 (685 aa).

The first 27 residues, 1–27 (MPVCGCLSVVLSHAVVLLMLVLHSASG), serve as a signal peptide directing secretion. The Extracellular segment spans residues 28–640 (HPQTFPCRLI…CGFTNNNKES (613 aa)). One can recognise an LRRNT domain in the interval 29–56 (PQTFPCRLIQRVALCSGRQLSVIPDCLP). LRR repeat units follow at residues 57 to 79 (HETE…LSRY), 80 to 102 (PFLR…AFIE), 103 to 129 (SHLL…AFRS), 130 to 154 (LTQL…LVAN), 155 to 178 (LSSL…TFRD), 180 to 201 (HQLK…AFDH), and 202 to 225 (MKKL…EMTQ). A glycan (N-linked (GlcNAc...) asparagine) is linked at asparagine 154. 2 N-linked (GlcNAc...) asparagine glycosylation sites follow: asparagine 230 and asparagine 244. 2 LRR repeats span residues 248-271 (TFQL…PTNN) and 273-296 (IRTL…TSSN). Residues asparagine 291, asparagine 296, asparagine 309, asparagine 312, and asparagine 325 are each glycosylated (N-linked (GlcNAc...) asparagine). LRR repeat units follow at residues 326–349 (LSSV…FIKQ), 351–373 (PQLY…SEDL), 374–397 (PVTI…QTSK), 400–423 (LNNL…IFTS), 425–447 (PNLN…NYMG), 457–480 (MASL…AFKG), 482–503 (SLTH…SLKG), 505–526 (ANTL…FSPY), 527–549 (TNLK…LMAL), 551–571 (LKLL…HASL), and 573–596 (AKKL…WFRT). N-linked (GlcNAc...) asparagine glycosylation is found at asparagine 402 and asparagine 407. Asparagine 533 carries N-linked (GlcNAc...) asparagine glycosylation. Positions 597-635 (FGENKGIHVADLSEITCLDLNYRRHKVVLTDAVYCGFTN) constitute an LRRCT domain. The helical transmembrane segment at 641–661 (VVWYILLFVTVSVSIMGISVI) threads the bilayer. Topologically, residues 662 to 685 (YMLTFKPRMLPRVIKKKCWRPTSY) are cytoplasmic.

It belongs to the LRRC32/LRRC33 family.

The protein resides in the cell membrane. It is found in the endoplasmic reticulum membrane. Its function is as follows. Key regulator of transforming growth factor beta-1 (TGFB1) specifically required for microglia function in the nervous system. Required for activation of latent TGF-beta-1 in macrophages and microglia: associates specifically via disulfide bonds with the Latency-associated peptide (LAP), which is the regulatory chain of TGFB1, and regulates integrin-dependent activation of TGF-beta-1. TGF-beta-1 activation mediated by lrrc33/nrros is highly localized: there is little spreading of TGF-beta-1 activated from one microglial cell to neighboring microglia, suggesting the existence of localized and selective activation of TGF-beta-1 by lrrc33/nrros. The chain is Transforming growth factor beta activator LRRC33 from Danio rerio (Zebrafish).